Consider the following 850-residue polypeptide: Lon protease (850 aa).

In terms of domain architecture, Lon N-terminal spans 38-232 (LPVLPLRDVV…LLVGLVDGEI (195 aa)). 384–391 (GPPGVGKT) lines the ATP pocket. The Lon proteolytic domain maps to 634 to 815 (ENEIGLVTGL…DEVLDLALER (182 aa)). Catalysis depends on residues S721 and K764. Residues 819–850 (PKKAGKEKARKTAPRVAVRGKSRSTPGTRVKH) are disordered. The span at 821 to 840 (KAGKEKARKTAPRVAVRGKS) shows a compositional bias: basic residues. The span at 841-850 (RSTPGTRVKH) shows a compositional bias: polar residues.

This sequence belongs to the peptidase S16 family. In terms of assembly, homohexamer. Organized in a ring with a central cavity.

The protein resides in the cytoplasm. It catalyses the reaction Hydrolysis of proteins in presence of ATP.. Its function is as follows. ATP-dependent serine protease that mediates the selective degradation of mutant and abnormal proteins as well as certain short-lived regulatory proteins. Required for cellular homeostasis and for survival from DNA damage and developmental changes induced by stress. Degrades polypeptides processively to yield small peptide fragments that are 5 to 10 amino acids long. Binds to DNA in a double-stranded, site-specific manner. The polypeptide is Lon protease (Xanthomonas oryzae pv. oryzae (strain KACC10331 / KXO85)).